The sequence spans 550 residues: Solute carrier family 22 member 6 (550 aa).

At 1-9 (MAFNDLLQQ) the chain is on the cytoplasmic side. The chain crosses the membrane as a helical span at residues 10–30 (VGGVGRFQQIQVTLVVLPLLL). Over 31–135 (MASHNTLQNF…LVCSHRALRQ (105 aa)) the chain is Extracellular. Asn39, Asn92, and Asn113 each carry an N-linked (GlcNAc...) asparagine glycan. A helical membrane pass occupies residues 136–156 (LAQSLYMVGVLLGAMVFGYLA). Over 157–164 (DRLGRRKV) the chain is Cytoplasmic. Residues 165 to 187 (LILNYLQTAVSGTCTAFAPNFSI) form a helical membrane-spanning segment. At 188 to 195 (YCAFRLLS) the chain is on the extracellular side. A helical transmembrane segment spans residues 196–216 (GMSLAGISLNCMTLNVEWMPI). Residues 217-224 (HTRACVGT) lie on the Cytoplasmic side of the membrane. The helical transmembrane segment at 225–245 (LIGYVYSLGQFLLAGVAYAVP) threads the bilayer. At 246-248 (HWR) the chain is on the extracellular side. A helical transmembrane segment spans residues 249 to 269 (HLQLLVSAPFFAFFIYSWFFI). Residues 270–337 (ESARWHSSSG…ELLRCPTLRH (68 aa)) are Cytoplasmic-facing. The chain crosses the membrane as a helical span at residues 338 to 358 (LFLCLSMLWFATSFAYYGLVM). At 359–368 (DLQGFGVSIY) the chain is on the extracellular side. A helical membrane pass occupies residues 369–389 (LIQVIFGAVDLPAKLVGFLVI). Residues 390 to 395 (NSLGRR) are Cytoplasmic-facing. Residues 396–416 (PAQMAALLLAGICILLNGVIP) traverse the membrane as a helical segment. Over 417-420 (QDQS) the chain is Extracellular. A helical transmembrane segment spans residues 421-444 (IVRTSLAVPGKGCLAASFNCIFLY). Topologically, residues 445–455 (TGELYPTMIRQ) are cytoplasmic. Residues 456–475 (TGMGMGSTMARVGSIVSPLV) form a helical membrane-spanning segment. At 476-484 (SMTAELYPS) the chain is on the extracellular side. A helical membrane pass occupies residues 485 to 505 (MPLFIYGAVPVAASAVTVLLP). Topologically, residues 506 to 550 (ETLGQPLPDTVQDLESRKGKQTRQQQEHQKYMVPLQASAQEKNGL) are cytoplasmic. The interval 514–550 (DTVQDLESRKGKQTRQQQEHQKYMVPLQASAQEKNGL) is disordered.

The protein belongs to the major facilitator (TC 2.A.1) superfamily. Organic cation transporter (TC 2.A.1.19) family. Post-translationally, glycosylated. Glycosylation is necessary for proper targeting of the transporter to the plasma membrane.

Its subcellular location is the cell membrane. The catalysed reaction is prostaglandin F2alpha(out) = prostaglandin F2alpha(in). It catalyses the reaction prostaglandin E2(out) = prostaglandin E2(in). In terms of biological role, involved in the renal elimination of endogenous and exogenous organic anions. Functions as organic anion exchanger when the uptake of one molecule of organic anion is coupled with an efflux of one molecule of endogenous dicarboxylic acid (glutarate, ketoglutarate, etc). Mediates the transport of prostaglandin E2 (PGE2) and prostaglandin F2-alpha (PGF2-alpha) and may be involved in their renal excretion. Also mediates the sodium-independent uptake of p-aminohippurate (PAH), 2,3-dimercapto-1-propanesulfonic acid (DMPS), cidofovir, adefovir, 9-(2-phosphonylmethoxyethyl) guanine (PMEG), 9-(2-phosphonylmethoxyethyl) diaminopurine (PMEDAP), ochratoxin (OTA), acyclovir (ACV), 3'-azido-3-'deoxythymidine (AZT), cimetidine (CMD), 2,4-dichloro-phenoxyacetate (2,4-D), hippurate (HA), indoleacetate (IA), indoxyl sulfate (IS) and 3-carboxy-4-methyl-5-propyl-2-furanpropionate (CMPF) and edaravone sulfate. PAH uptake is inhibited by p-chloromercuribenzenesulphonate (PCMBS), diethyl pyrocarbonate (DEPC), indomethacin, sulindac, diclofenac, carprofen, okadaic acid, benzothiazolylcysteine (BTC), S-chlorotrifluoroethylcysteine (CTFC), cysteine S-conjugates S-dichlorovinylcysteine (DCVC), furosemide, steviol, phorbol 12-myristate 13-acetate (PMA), calcium ionophore A23187, benzylpenicillin, bumetamide, losartan, probenecid, phenol red, urate, glutarate and alpha-ketoglutarate. The sequence is that of Solute carrier family 22 member 6 (SLC22A6) from Pongo abelii (Sumatran orangutan).